The chain runs to 213 residues: Ribonuclease Oy (213 aa).

Histidine 35 is an active-site residue. Cysteine 51 and cysteine 96 are oxidised to a cystine. Asparagine 52 carries N-linked (GlcNAc...) asparagine glycosylation. Active-site residues include glutamate 89 and histidine 93. Asparagine 121 and asparagine 142 each carry an N-linked (GlcNAc...) asparagine glycan. Cystine bridges form between cysteine 160–cysteine 198 and cysteine 178–cysteine 188.

The protein belongs to the RNase T2 family.

It localises to the secreted. Its function is as follows. Releases mononucleotides from RNA in the order of 3'-GMP, 3'-AMP and 3'-UMP. The sequence is that of Ribonuclease Oy from Magallana gigas (Pacific oyster).